Consider the following 291-residue polypeptide: MSVLTTRAPAKINLTLHILGRRPGDGYHALESLVAFADVADTLELVPGPDLTLDISGPTAGPAGPLDDNLVLRAARHLAAGVDGLRLGAFRLHKQLPVAAGIGGGSSDAAAALRLLAELNGLALDYPAVIAAARATGADVPVCLDPRARMMRGAGEEIGPVLGLASLPAVLVNPGVPVSTAPVFKALGLAVGQQLDGAEHPVVGASLDADAVLGVIAPARNDLEAPALTVAPVIGEALGLLWAQAGCRLARMSGSGATVFAIFSDDGAAEMAAGAIRAAQPGWWVEPTRLA.

K11 is an active-site residue. 97–107 (PVAAGIGGGSS) serves as a coordination point for ATP. D139 is a catalytic residue.

The protein belongs to the GHMP kinase family. IspE subfamily.

It carries out the reaction 4-CDP-2-C-methyl-D-erythritol + ATP = 4-CDP-2-C-methyl-D-erythritol 2-phosphate + ADP + H(+). It participates in isoprenoid biosynthesis; isopentenyl diphosphate biosynthesis via DXP pathway; isopentenyl diphosphate from 1-deoxy-D-xylulose 5-phosphate: step 3/6. Catalyzes the phosphorylation of the position 2 hydroxy group of 4-diphosphocytidyl-2C-methyl-D-erythritol. The polypeptide is 4-diphosphocytidyl-2-C-methyl-D-erythritol kinase (Methylorubrum extorquens (strain PA1) (Methylobacterium extorquens)).